The following is a 97-amino-acid chain: Translation initiation factor 1A (97 aa).

The 75-residue stretch at 8–82 (IRVRLPDRKK…DRADIVWRYT (75 aa)) folds into the S1-like domain.

This sequence belongs to the eIF-1A family.

Its function is as follows. Seems to be required for maximal rate of protein biosynthesis. Enhances ribosome dissociation into subunits and stabilizes the binding of the initiator Met-tRNA(I) to 40 S ribosomal subunits. The polypeptide is Translation initiation factor 1A (eIF1A) (Archaeoglobus fulgidus (strain ATCC 49558 / DSM 4304 / JCM 9628 / NBRC 100126 / VC-16)).